Here is an 80-residue protein sequence, read N- to C-terminus: Protein FAM229B (80 aa).

Positions 1 to 44 (MPFQFGTQPRRFPVEGGDSSIELEPGLSSSAACNGKEMSPTRQL) are disordered.

Belongs to the FAM229 family.

In Homo sapiens (Human), this protein is Protein FAM229B (FAM229B).